Reading from the N-terminus, the 392-residue chain is 26S proteasome regulatory subunit 8 homolog (392 aa).

176–183 (GPPGTGKT) is a binding site for ATP.

It belongs to the AAA ATPase family. As to quaternary structure, the 26S proteasome consists of a 20S proteasome core and two 19S regulatory subunits. The 20S proteasome core is composed of 28 subunits that are arranged in four stacked rings, resulting in a barrel-shaped structure. The two end rings are each formed by seven alpha subunits, and the two central rings are each formed by seven beta subunits. The catalytic chamber with the active sites is on the inside of the barrel.

It localises to the cytoplasm. The protein resides in the nucleus. Functionally, acts as a regulatory subunit of the 26S proteasome which degrades poly-ubiquitinated proteins in the cytoplasm and in the nucleus. It is essential for the regulated turnover of proteins and for the removal of misfolded proteins. The proteasome is a multicatalytic proteinase complex that is characterized by its ability to cleave peptides with Arg, Phe, Tyr, Leu, and Glu adjacent to the leaving group at neutral or slightly basic pH. The polypeptide is 26S proteasome regulatory subunit 8 homolog (RPT6) (Encephalitozoon cuniculi (strain GB-M1) (Microsporidian parasite)).